The primary structure comprises 179 residues: Putative cleavage and polyadenylation specificity factor subunit 4-like protein (179 aa).

5 consecutive C3H1-type zinc fingers follow at residues Lys-35–Arg-61, Gly-62–Asp-89, Leu-90–Pro-117, Ala-118–Arg-145, and Ile-146–Arg-169.

It belongs to the CPSF4/YTH1 family.

This is Putative cleavage and polyadenylation specificity factor subunit 4-like protein (CPSF4L) from Homo sapiens (Human).